Reading from the N-terminus, the 329-residue chain is GTPase Obg (329 aa).

The region spanning 1-159 (MQFIDQAIID…WSLQLELKLL (159 aa)) is the Obg domain. The OBG-type G domain maps to 160–328 (AEVGIIGLPN…LLSSIWYELG (169 aa)). Residues 166–173 (GLPNAGKS), 191–195 (FTTLI), 213–216 (DIPG), 280–283 (NKKE), and 309–311 (SAV) contribute to the ATP site. Residues Ser-173 and Thr-193 each coordinate Mg(2+).

Belongs to the TRAFAC class OBG-HflX-like GTPase superfamily. OBG GTPase family. Monomer. Mg(2+) serves as cofactor.

Its subcellular location is the cytoplasm. In terms of biological role, an essential GTPase which binds GTP, GDP and possibly (p)ppGpp with moderate affinity, with high nucleotide exchange rates and a fairly low GTP hydrolysis rate. Plays a role in control of the cell cycle, stress response, ribosome biogenesis and in those bacteria that undergo differentiation, in morphogenesis control. The polypeptide is GTPase Obg (Prochlorococcus marinus (strain NATL1A)).